The chain runs to 550 residues: Thioredoxin domain-containing protein 2 (550 aa).

Residues 1 to 50 are disordered; it reads MFKKNQKLSKDKGLEVNSVQAGAPEESDVKLNNGGKANERGSNEFLDTAQ. Ser42 and Ser51 each carry phosphoserine. The disordered stretch occupies residues 63 to 428; the sequence is MLHMSTEESE…IKSSEDVQPS (366 aa). Polar residues-rich tracts occupy residues 73–87, 96–105, and 112–140; these read PPQQ…SENT, PKSSTKNTQL, and KTSS…QGST. 22 tandem repeats follow at residues 104–118, 119–133, 134–148, 149–163, 164–178, 179–193, 194–208, 209–223, 224–238, 239–252, 253–267, 268–282, 283–297, 298–312, 313–327, 328–342, 343–357, 358–384, 385–399, 400–412, 413–425, and 426–440. Residues 104 to 440 form a 22 X 15 AA approximate tandem repeat of Q-P-K-X-G-D-I-P-K-S-[PS]-E-[KE]-X-I region; the sequence is QLKQEDISKT…EIFPFEAEIE (337 aa). Basic and acidic residues-rich tracts occupy residues 148–205, 217–259, 277–304, and 313–348; these read THDR…KSLE, KSSE…ESET, QVKD…ENKI, and QPKE…KEEI. Ser158 carries the post-translational modification Phosphoserine. 2 positions are modified to phosphoserine: Ser351 and Ser379. Positions 401–550 constitute a Thioredoxin domain; the sequence is KEEITVSPED…KLEKSIAELK (150 aa). Position 407 is a phosphoserine (Ser407). Cys477 and Cys480 are disulfide-bonded.

Testis-specific. Strongly expressed in the testicular seminiferous tubules, mostly in the round spermatids.

The protein resides in the cytoplasm. Probably plays a regulatory role in sperm development. May participate in regulation of fibrous sheath (FS) assembly by supporting the formation of disulfide bonds during sperm tail morphogenesis. May also be required to rectify incorrect disulfide pairing and generate suitable pairs between the FS constituents. Can reduce disulfide bonds in vitro in the presence of NADP and thioredoxin reductase. This is Thioredoxin domain-containing protein 2 (Txndc2) from Rattus norvegicus (Rat).